Reading from the N-terminus, the 384-residue chain is MKKKLVVLGSTGSIGTQTLEVLSHLEDQWEILALSANKSTGLIEKQARKFKPRYLVMMNERAALELKHRLSDMSSEVLSGMEGLITISSLEEADLVINALVGAVGLKPTVAALQSGNTLGLANKESLVIGGEIIKSYLNEEGRVLPVDSEHNAIFQLLNGHNDKEVERLILTASGGPFLELPRERFKDVSVKDALKHPNWDMGGKITIDSATLMNKGLEVIEAHYLFRQPYHNINVVVHPESIIHSMVEFVDKSVIAEMGSADMRMPIQYVLTYPRKVKSLAKRLDLTELGYLTFKKPDTVKFPALKLAYEAGQQGGTMPVVLNAANEIAVSAFMNEKITFDKIPVVIERVMENHQIISSPDLEDVIEVDNWARARAKEVTGQC.

The NADPH site is built by threonine 11, glycine 12, serine 13, isoleucine 14, lysine 38, and asparagine 123. Lysine 124 lines the 1-deoxy-D-xylulose 5-phosphate pocket. Glutamate 125 serves as a coordination point for NADPH. Residue aspartate 148 coordinates Mn(2+). Serine 149, glutamate 150, serine 174, and histidine 197 together coordinate 1-deoxy-D-xylulose 5-phosphate. Glutamate 150 serves as a coordination point for Mn(2+). Glycine 203 is an NADPH binding site. 1-deoxy-D-xylulose 5-phosphate-binding residues include serine 210, asparagine 215, lysine 216, and glutamate 219. A Mn(2+)-binding site is contributed by glutamate 219.

This sequence belongs to the DXR family. Mg(2+) is required as a cofactor. Requires Mn(2+) as cofactor.

It carries out the reaction 2-C-methyl-D-erythritol 4-phosphate + NADP(+) = 1-deoxy-D-xylulose 5-phosphate + NADPH + H(+). The protein operates within isoprenoid biosynthesis; isopentenyl diphosphate biosynthesis via DXP pathway; isopentenyl diphosphate from 1-deoxy-D-xylulose 5-phosphate: step 1/6. Catalyzes the NADPH-dependent rearrangement and reduction of 1-deoxy-D-xylulose-5-phosphate (DXP) to 2-C-methyl-D-erythritol 4-phosphate (MEP). The chain is 1-deoxy-D-xylulose 5-phosphate reductoisomerase from Halothermothrix orenii (strain H 168 / OCM 544 / DSM 9562).